The primary structure comprises 240 residues: UDP-2,3-diacylglucosamine hydrolase (240 aa).

The Mn(2+) site is built by Asp7, His9, Asp40, Asn78, and His113. 78–79 serves as a coordination point for substrate; it reads NR. Residues Asp121, Ser159, Thr163, Lys166, and His194 each contribute to the substrate site. His194 and His196 together coordinate Mn(2+).

It belongs to the LpxH family. Requires Mn(2+) as cofactor.

The protein resides in the cell inner membrane. The catalysed reaction is UDP-2-N,3-O-bis[(3R)-3-hydroxytetradecanoyl]-alpha-D-glucosamine + H2O = 2-N,3-O-bis[(3R)-3-hydroxytetradecanoyl]-alpha-D-glucosaminyl 1-phosphate + UMP + 2 H(+). It functions in the pathway glycolipid biosynthesis; lipid IV(A) biosynthesis; lipid IV(A) from (3R)-3-hydroxytetradecanoyl-[acyl-carrier-protein] and UDP-N-acetyl-alpha-D-glucosamine: step 4/6. Its function is as follows. Hydrolyzes the pyrophosphate bond of UDP-2,3-diacylglucosamine to yield 2,3-diacylglucosamine 1-phosphate (lipid X) and UMP by catalyzing the attack of water at the alpha-P atom. Involved in the biosynthesis of lipid A, a phosphorylated glycolipid that anchors the lipopolysaccharide to the outer membrane of the cell. The polypeptide is UDP-2,3-diacylglucosamine hydrolase (Pseudomonas putida (strain W619)).